The following is a 300-amino-acid chain: Ribosomal RNA small subunit methyltransferase H (300 aa).

S-adenosyl-L-methionine-binding positions include 46 to 48 (GGH), D65, F92, D107, and Q114.

Belongs to the methyltransferase superfamily. RsmH family.

It is found in the cytoplasm. The enzyme catalyses cytidine(1402) in 16S rRNA + S-adenosyl-L-methionine = N(4)-methylcytidine(1402) in 16S rRNA + S-adenosyl-L-homocysteine + H(+). In terms of biological role, specifically methylates the N4 position of cytidine in position 1402 (C1402) of 16S rRNA. In Prochlorococcus marinus (strain MIT 9301), this protein is Ribosomal RNA small subunit methyltransferase H.